The chain runs to 31 residues: Chassatide C6 (31 aa).

The cyclopeptide (Gly-Asn) cross-link spans 1–31 (GVIPCGESCVFIPCISSVIGCSCKNKVCYRN). 3 disulfide bridges follow: Cys-5–Cys-21, Cys-9–Cys-23, and Cys-14–Cys-28.

In terms of processing, this is a cyclic peptide. As to expression, expressed in fruit, pedicel, root and stem but not in leaf (at protein level).

Functionally, probably participates in a plant defense mechanism. The polypeptide is Chassatide C6 (Chassalia chartacea (Chassalia curviflora)).